We begin with the raw amino-acid sequence, 592 residues long: V-type ATP synthase alpha chain (592 aa).

232 to 239 (GPFGSGKT) lines the ATP pocket.

This sequence belongs to the ATPase alpha/beta chains family.

The enzyme catalyses ATP + H2O + 4 H(+)(in) = ADP + phosphate + 5 H(+)(out). In terms of biological role, produces ATP from ADP in the presence of a proton gradient across the membrane. The V-type alpha chain is a catalytic subunit. This is V-type ATP synthase alpha chain from Clostridioides difficile (strain 630) (Peptoclostridium difficile).